We begin with the raw amino-acid sequence, 400 residues long: Glycine betaine/proline betaine transport system ATP-binding protein ProV (400 aa).

The ABC transporter domain occupies 29–265; that stretch reads LSKEQILEKT…PANDYVRTFF (237 aa). Position 61-68 (61-68) interacts with ATP; that stretch reads GLSGSGKS. CBS domains follow at residues 282–341 and 343–400; these read RTPN…GLDA and LIDA…VNNG.

Belongs to the ABC transporter superfamily. In terms of assembly, the complex is composed of two ATP-binding proteins (ProV), two transmembrane proteins (ProW) and a solute-binding protein (ProX).

The protein localises to the cell inner membrane. Its function is as follows. Part of the ProU ABC transporter complex involved in glycine betaine and proline betaine uptake. Probably responsible for energy coupling to the transport system. This is Glycine betaine/proline betaine transport system ATP-binding protein ProV from Escherichia coli (strain K12).